The sequence spans 466 residues: Asparagine--tRNA ligase (466 aa).

The protein belongs to the class-II aminoacyl-tRNA synthetase family. Homodimer.

The protein localises to the cytoplasm. It carries out the reaction tRNA(Asn) + L-asparagine + ATP = L-asparaginyl-tRNA(Asn) + AMP + diphosphate + H(+). The chain is Asparagine--tRNA ligase from Shewanella loihica (strain ATCC BAA-1088 / PV-4).